The primary structure comprises 180 residues: Fanconi anemia core complex-associated protein 20 (180 aa).

Basic residues predominate over residues 1–17 (MEAARRPRLGLSRRRPR). Disordered regions lie at residues 1–28 (MEAA…GRPW) and 106–135 (GAGG…VEQQ). A phosphoserine mark is found at Ser-113 and Ser-137. A UBZ2-type zinc finger spans residues 144-180 (LRSCPMCQKEFAPRLTQLDVDSHLAQCLAESTEDVTW). Residues Cys-147, Cys-150, His-166, and Cys-170 each coordinate Zn(2+).

As to quaternary structure, component of the Fanconi anemia (FA) complex. Interacts with FANCA; interaction is direct. Interacts with REV1. Reported to bind monoubiquitinated REV1; however it binds better to non-ubiquitinated REV1.

The protein localises to the nucleus. It localises to the chromosome. Its function is as follows. Component of the Fanconi anemia (FA) complex required to recruit the FA complex to DNA interstrand cross-links (ICLs) and promote ICLs repair. Following DNA damage recognizes and binds 'Lys-63'-linked ubiquitin generated by RNF8 at ICLs and recruits other components of the FA complex. Promotes translesion synthesis via interaction with REV1. This is Fanconi anemia core complex-associated protein 20 from Homo sapiens (Human).